The chain runs to 188 residues: Single-stranded DNA-binding protein DdrB (188 aa).

The segment at 140–188 (YAVPGGAAGNGQGRPAPQGQPAQARPQATAARPAARPPVQPGQEEETPF) is disordered. Residues 152–173 (GRPAPQGQPAQARPQATAARPA) are compositionally biased toward low complexity.

In terms of assembly, homopentamer arranged in a ring-structure; DNA binds between subunits and along the top of the ring. The pentamers self-associate to coat ssDNA in higher-ordered structures; oligomerization facilitates the assembly of extended nucleoprotein complexes. Self-assembly does not however require ssDNA-binding. Interacts with SSB.

Its function is as follows. ssDNA-binding protein that contributes to the ionizing radiation resistance of D.radiodurans. Plays a role in DNA repair and genome reconstitution in a RecA-independent process. Required for recovery from severe genomic fragmentation as a result of exposure to severe levels of ionizing radiation. Binds ssDNA but not dsDNA. Stimulates annealing of complementary ssDNA. Does not complement an ssb disruption. The chain is Single-stranded DNA-binding protein DdrB (ddrB) from Deinococcus radiodurans (strain ATCC 13939 / DSM 20539 / JCM 16871 / CCUG 27074 / LMG 4051 / NBRC 15346 / NCIMB 9279 / VKM B-1422 / R1).